The chain runs to 432 residues: Transcriptional adapter 3-B (432 aa).

2 disordered regions span residues 90–124 (HELGTPIKHSKPKKQKLDGKGSHASGPGPGRPKSR) and 275–315 (SPVE…KSLE). Residues 293–305 (DGASTSPRSQNKP) are compositionally biased toward polar residues. Residues 335–398 (ADDSEDEVLA…NEVMDAFRKI (64 aa)) adopt a coiled-coil conformation.

The protein belongs to the NGG1 family.

It is found in the nucleus. Functionally, functions as a component of the PCAF complex. The PCAF complex is capable of efficiently acetylating histones in a nucleosomal context. In Xenopus laevis (African clawed frog), this protein is Transcriptional adapter 3-B (tada3-b).